The chain runs to 51 residues: Large ribosomal subunit protein eL39 (51 aa).

Belongs to the eukaryotic ribosomal protein eL39 family.

The sequence is that of Large ribosomal subunit protein eL39 (rpl39e) from Methanocaldococcus jannaschii (strain ATCC 43067 / DSM 2661 / JAL-1 / JCM 10045 / NBRC 100440) (Methanococcus jannaschii).